The chain runs to 122 residues: Small ribosomal subunit protein uS13 (122 aa).

The interval 92–122 (HRKQLPVRGQRTHTNARTRKGKAKPIAGKKK) is disordered.

The protein belongs to the universal ribosomal protein uS13 family. As to quaternary structure, part of the 30S ribosomal subunit. Forms a loose heterodimer with protein S19. Forms two bridges to the 50S subunit in the 70S ribosome.

Functionally, located at the top of the head of the 30S subunit, it contacts several helices of the 16S rRNA. In the 70S ribosome it contacts the 23S rRNA (bridge B1a) and protein L5 of the 50S subunit (bridge B1b), connecting the 2 subunits; these bridges are implicated in subunit movement. Contacts the tRNAs in the A and P-sites. This Methylobacterium radiotolerans (strain ATCC 27329 / DSM 1819 / JCM 2831 / NBRC 15690 / NCIMB 10815 / 0-1) protein is Small ribosomal subunit protein uS13.